The following is a 231-amino-acid chain: MAGLVDFKNEEEVKDYLDNLGTEYSYQCFKEKQPDGCNRLAEYFENIKKNFESAAGILKINCDQNEHSESFYKLGAYYVTGKGGLPVDLKAAYSCFLKSCNKGGKKSIDSCHNVGLLAHDGRVNDEKADAVTARDYYNKACDGNFAASCFNLSATYLQGAPGIPKDMNKALHFSEKACSLGHVWGCANASRMYKLGDGVAKNDEKAESLKNRARDLHKMQQERTPQISFGE.

5 Sel1-like repeats span residues Pro34–Glu66, Ser68–Gly104, Ile108–Phe145, Ala146–His182, and Val183–Lys218.

This sequence belongs to the hcp beta-lactamase family.

The protein localises to the mitochondrion intermembrane space. In terms of biological role, may be required for assembly of mitochondrial respiratory chain complexes. This is Cytochrome c oxidase assembly factor 7A (coa7-a) from Xenopus laevis (African clawed frog).